Consider the following 184-residue polypeptide: MYTSNIQVASRYAKSLLKQAIDMGVLDHVYKDALFFKKVGKSHKTLFRVLHNPIIKNETKLAILTSIFQSRIHPLTFHLLKLLSHRKREGILPTIIDTFLEQYYIYRGIKAASVTTTFRLSDDLIRYFKNLAKSLVPCKEVILKEYVNPSIQGGFVLRIEDQQLDNSLATRLHKLKKQYSIAEY.

The protein belongs to the ATPase delta chain family. F-type ATPases have 2 components, F(1) - the catalytic core - and F(0) - the membrane proton channel. F(1) has five subunits: alpha(3), beta(3), gamma(1), delta(1), epsilon(1). F(0) has three main subunits: a(1), b(2) and c(10-14). The alpha and beta chains form an alternating ring which encloses part of the gamma chain. F(1) is attached to F(0) by a central stalk formed by the gamma and epsilon chains, while a peripheral stalk is formed by the delta and b chains.

It is found in the cell membrane. F(1)F(0) ATP synthase produces ATP from ADP in the presence of a proton or sodium gradient. F-type ATPases consist of two structural domains, F(1) containing the extramembraneous catalytic core and F(0) containing the membrane proton channel, linked together by a central stalk and a peripheral stalk. During catalysis, ATP synthesis in the catalytic domain of F(1) is coupled via a rotary mechanism of the central stalk subunits to proton translocation. In terms of biological role, this protein is part of the stalk that links CF(0) to CF(1). It either transmits conformational changes from CF(0) to CF(1) or is implicated in proton conduction. The polypeptide is ATP synthase subunit delta (Amoebophilus asiaticus (strain 5a2)).